A 421-amino-acid chain; its full sequence is Cytochrome c biogenesis protein Ccs1 (421 aa).

3 helical membrane passes run 12-32 (LRFA…GTVI), 71-91 (TWWF…CTLL), and 157-177 (IAPI…IIGS).

This sequence belongs to the Ccs1/CcsB family. As to quaternary structure, may interact with CcsA.

It localises to the plastid. The protein localises to the chloroplast thylakoid membrane. Functionally, required during biogenesis of c-type cytochromes (cytochrome c6 and cytochrome f) at the step of heme attachment. In Thalassiosira pseudonana (Marine diatom), this protein is Cytochrome c biogenesis protein Ccs1.